Here is a 265-residue protein sequence, read N- to C-terminus: Probable U2 small nuclear ribonucleoprotein A' (265 aa).

4 LRR repeats span residues R20–L41, Q43–P64, R65–A86, and N89–V110. An LRRCT domain is found at N123–F161.

The protein belongs to the U2 small nuclear ribonucleoprotein A family. In terms of assembly, interacts with the SMN complex.

The protein resides in the nucleus. In terms of biological role, involved in pre-mRNA splicing as component of the spliceosome. Associated with sn-RNP U2, where it contributes to the binding of stem loop IV of U2 snRNA. In the germ line, has a role in oogenesis, by regulating spermatogenesis and nurse cell nuclei chromatin decondensation and dispersal, probably by regulating the splicing of proteins necessary for germline differentiation such as the meiotic protein mei-P26. In Drosophila melanogaster (Fruit fly), this protein is Probable U2 small nuclear ribonucleoprotein A' (U2A).